The primary structure comprises 262 residues: Cytochrome c oxidase subunit 3 (262 aa).

A run of 6 helical transmembrane segments spans residues 39-59 (YTMT…YQWW), 83-103 (GMIL…WAFF), 120-140 (VGII…ILLA), 163-183 (GLFF…YEYI), 201-221 (ATGF…ICFL), and 240-260 (AWYW…IYWW).

Belongs to the cytochrome c oxidase subunit 3 family. In terms of assembly, component of the cytochrome c oxidase (complex IV, CIV), a multisubunit enzyme composed of a catalytic core of 3 subunits and several supernumerary subunits. The complex exists as a monomer or a dimer and forms supercomplexes (SCs) in the inner mitochondrial membrane with ubiquinol-cytochrome c oxidoreductase (cytochrome b-c1 complex, complex III, CIII).

It localises to the mitochondrion inner membrane. The catalysed reaction is 4 Fe(II)-[cytochrome c] + O2 + 8 H(+)(in) = 4 Fe(III)-[cytochrome c] + 2 H2O + 4 H(+)(out). Functionally, component of the cytochrome c oxidase, the last enzyme in the mitochondrial electron transport chain which drives oxidative phosphorylation. The respiratory chain contains 3 multisubunit complexes succinate dehydrogenase (complex II, CII), ubiquinol-cytochrome c oxidoreductase (cytochrome b-c1 complex, complex III, CIII) and cytochrome c oxidase (complex IV, CIV), that cooperate to transfer electrons derived from NADH and succinate to molecular oxygen, creating an electrochemical gradient over the inner membrane that drives transmembrane transport and the ATP synthase. Cytochrome c oxidase is the component of the respiratory chain that catalyzes the reduction of oxygen to water. Electrons originating from reduced cytochrome c in the intermembrane space (IMS) are transferred via the dinuclear copper A center (CU(A)) of subunit 2 and heme A of subunit 1 to the active site in subunit 1, a binuclear center (BNC) formed by heme A3 and copper B (CU(B)). The BNC reduces molecular oxygen to 2 water molecules using 4 electrons from cytochrome c in the IMS and 4 protons from the mitochondrial matrix. This Anopheles quadrimaculatus (Common malaria mosquito) protein is Cytochrome c oxidase subunit 3 (COIII).